We begin with the raw amino-acid sequence, 199 residues long: dITP/XTP pyrophosphatase (199 aa).

A substrate-binding site is contributed by 7-12 (TGNKGK). Residue aspartate 71 is the Proton acceptor of the active site. Aspartate 71 contacts Mg(2+). Substrate-binding positions include alanine 72, 154-157 (FGYD), lysine 177, and 182-183 (HR).

It belongs to the HAM1 NTPase family. In terms of assembly, homodimer. Mg(2+) is required as a cofactor.

The enzyme catalyses XTP + H2O = XMP + diphosphate + H(+). It catalyses the reaction dITP + H2O = dIMP + diphosphate + H(+). The catalysed reaction is ITP + H2O = IMP + diphosphate + H(+). Functionally, pyrophosphatase that catalyzes the hydrolysis of nucleoside triphosphates to their monophosphate derivatives, with a high preference for the non-canonical purine nucleotides XTP (xanthosine triphosphate), dITP (deoxyinosine triphosphate) and ITP. Seems to function as a house-cleaning enzyme that removes non-canonical purine nucleotides from the nucleotide pool, thus preventing their incorporation into DNA/RNA and avoiding chromosomal lesions. This Bdellovibrio bacteriovorus (strain ATCC 15356 / DSM 50701 / NCIMB 9529 / HD100) protein is dITP/XTP pyrophosphatase.